The sequence spans 113 residues: Large ribosomal subunit protein uL24 (113 aa).

This sequence belongs to the universal ribosomal protein uL24 family. Part of the 50S ribosomal subunit.

Functionally, one of two assembly initiator proteins, it binds directly to the 5'-end of the 23S rRNA, where it nucleates assembly of the 50S subunit. Its function is as follows. One of the proteins that surrounds the polypeptide exit tunnel on the outside of the subunit. The sequence is that of Large ribosomal subunit protein uL24 from Synechococcus elongatus (strain ATCC 33912 / PCC 7942 / FACHB-805) (Anacystis nidulans R2).